The primary structure comprises 246 residues: Ribulose-phosphate 3-epimerase (246 aa).

S9 is a binding site for substrate. The a divalent metal cation site is built by H34, D36, and H83. The active-site Proton acceptor is D36. Residues H83, 159-162 (GFGG), 188-190 (DGG), and 210-212 (GTS) contribute to the substrate site. D188 provides a ligand contact to a divalent metal cation. The active-site Proton donor is the D188.

It belongs to the ribulose-phosphate 3-epimerase family. The cofactor is Co(2+). Requires Fe(2+) as cofactor. Mn(2+) serves as cofactor. Zn(2+) is required as a cofactor.

The catalysed reaction is D-ribulose 5-phosphate = D-xylulose 5-phosphate. The protein operates within carbohydrate degradation; pentose phosphate pathway; D-xylulose 5-phosphate from D-ribulose 5-phosphate (non-oxidative stage): step 1/1. Its function is as follows. Catalyzes the reversible epimerization of D-ribulose 5-phosphate to D-xylulose 5-phosphate. In Candida glabrata (strain ATCC 2001 / BCRC 20586 / JCM 3761 / NBRC 0622 / NRRL Y-65 / CBS 138) (Yeast), this protein is Ribulose-phosphate 3-epimerase (RPE1).